Reading from the N-terminus, the 112-residue chain is Putative pterin-4-alpha-carbinolamine dehydratase (112 aa).

The interval 1-30 is disordered; the sequence is MSDELQSRTCTPCRGDVPPMTKAEAKRQLA.

The protein belongs to the pterin-4-alpha-carbinolamine dehydratase family.

The catalysed reaction is (4aS,6R)-4a-hydroxy-L-erythro-5,6,7,8-tetrahydrobiopterin = (6R)-L-erythro-6,7-dihydrobiopterin + H2O. The chain is Putative pterin-4-alpha-carbinolamine dehydratase from Aromatoleum aromaticum (strain DSM 19018 / LMG 30748 / EbN1) (Azoarcus sp. (strain EbN1)).